Here is a 318-residue protein sequence, read N- to C-terminus: Beta-ketoacyl-[acyl-carrier-protein] synthase III (318 aa).

Active-site residues include Cys112 and His245. An ACP-binding region spans residues 246 to 250 (QANIR). Residue Asn275 is part of the active site.

It belongs to the thiolase-like superfamily. FabH family. As to quaternary structure, homodimer.

The protein localises to the cytoplasm. It carries out the reaction malonyl-[ACP] + acetyl-CoA + H(+) = 3-oxobutanoyl-[ACP] + CO2 + CoA. The protein operates within lipid metabolism; fatty acid biosynthesis. Functionally, catalyzes the condensation reaction of fatty acid synthesis by the addition to an acyl acceptor of two carbons from malonyl-ACP. Catalyzes the first condensation reaction which initiates fatty acid synthesis and may therefore play a role in governing the total rate of fatty acid production. Possesses both acetoacetyl-ACP synthase and acetyl transacylase activities. Its substrate specificity determines the biosynthesis of branched-chain and/or straight-chain of fatty acids. This is Beta-ketoacyl-[acyl-carrier-protein] synthase III from Rickettsia conorii (strain ATCC VR-613 / Malish 7).